A 208-amino-acid chain; its full sequence is MSRRATVKAPRAGAAARRGAVARRTKETDVAVELRLEPGEAAISTGLPFFDHMLDQISRHGGMALTVRAKGDLQVDAHHTVEDVGIGLGEALRQALEDKAGLARYGHAVVPLDEALVEAVVDLSGRPHLTFNAKLPSGKKFIGGYDVDLTQDFLQALVNHARICVHVNVRYGRNLHHVVEAIFKATARALRAATAREGTALPSTKGTL.

The segment at 1–20 (MSRRATVKAPRAGAAARRGA) is disordered. Positions 7 to 19 (VKAPRAGAAARRG) are enriched in low complexity.

This sequence belongs to the imidazoleglycerol-phosphate dehydratase family.

It localises to the cytoplasm. It carries out the reaction D-erythro-1-(imidazol-4-yl)glycerol 3-phosphate = 3-(imidazol-4-yl)-2-oxopropyl phosphate + H2O. Its pathway is amino-acid biosynthesis; L-histidine biosynthesis; L-histidine from 5-phospho-alpha-D-ribose 1-diphosphate: step 6/9. This Anaeromyxobacter sp. (strain K) protein is Imidazoleglycerol-phosphate dehydratase.